A 234-amino-acid polypeptide reads, in one-letter code: Small ribosomal subunit protein eS4 (234 aa).

The S4 RNA-binding domain maps to 37-99; it reads VPLLIVLRDV…REEYYRVFPG (63 aa).

This sequence belongs to the eukaryotic ribosomal protein eS4 family.

This Haloarcula marismortui (strain ATCC 43049 / DSM 3752 / JCM 8966 / VKM B-1809) (Halobacterium marismortui) protein is Small ribosomal subunit protein eS4 (rps4e).